A 98-amino-acid chain; its full sequence is Cytochrome c2 (98 aa).

At Gln1 the chain carries Pyrrolidone carboxylic acid. 4 residues coordinate heme c: Cys10, Cys13, His14, and Met76.

It belongs to the cytochrome c family. In terms of processing, binds 1 heme c group covalently per subunit.

It is found in the periplasm. Functionally, cytochrome c2 is found mainly in purple, non-sulfur, photosynthetic bacteria where it functions as the electron donor to the oxidized bacteriochlorophyll in the photophosphorylation pathway. However, it may also have a role in the respiratory chain and is found in some non-photosynthetic bacteria. This chain is Cytochrome c2, found in Rhodoplanes tepidamans (Rhodoplanes cryptolactis).